We begin with the raw amino-acid sequence, 855 residues long: uncharacterized protein (855 aa).

Transmembrane regions (helical) follow at residues 24–44 (PFQY…IVAI), 256–276 (AFTV…IFLI), 318–338 (IGTG…IGLV), 361–381 (LLKG…PPAI), 404–424 (LMPW…LMLW), 430–450 (LVVA…IAPP), 487–507 (IAIA…ISVG), 725–745 (ITIA…LSAL), 780–800 (MGGM…WILV), and 821–841 (FLRA…YPAW).

This sequence belongs to the ABC-4 integral membrane protein family. As to quaternary structure, the complex is probably composed of two ATP-binding proteins (Rv0986) and two transmembrane proteins (Rv0987).

It localises to the cell membrane. In terms of biological role, probably part of an ABC transporter complex involved in host cell binding either through secretion of an adherence factor or through maintaining the architecture and integrity of the mycobacterial cell envelope. Could be required for host endothelial-cell invasion and/or intracellular survival. This is an uncharacterized protein from Mycobacterium tuberculosis (strain ATCC 25618 / H37Rv).